The primary structure comprises 172 residues: RNA silencing suppressor p19 (172 aa).

A compositionally biased stretch (basic and acidic residues) spans 1 to 20 (MERAIQGNDTREQANGERWD). Residues 1–27 (MERAIQGNDTREQANGERWDGGSGGIT) are disordered.

Belongs to the tombusvirus protein p19 family. In terms of assembly, homodimer.

Acts as a suppressor of RNA-mediated gene silencing, also known as post-transcriptional gene silencing (PTGS), a mechanism of plant viral defense that limits the accumulation of viral RNAs. Binds to short interfering RNAs (siRNAs) with high affinity. Acts as a molecular caliper to specifically select siRNAs based on the length of the duplex region of the RNA. The polypeptide is RNA silencing suppressor p19 (Dianthus caryophyllus (Carnation)).